The following is a 221-amino-acid chain: MKPVHAFMRLYFIAGTQDCLHLDGDPAQNLLNILQQALQSGITCYQFREKGKKALQDPDKIKALAIQCRDLCRQYQVPFVVNDDVQLAIDIGADGIHVGQTDMAVADVAALCHSHCFIGTSVNTLEQGIAAQANPLIDYFGTGPIFPTQSKEDPKPVVGVDFVSTIRAHGIDKPIVAIGGVTTQTAEELRRRGANGVAVISAITQSADIAKTVKELLGNAQ.

4-amino-2-methyl-5-(diphosphooxymethyl)pyrimidine contacts are provided by residues 46-50 (QFREK) and N82. Positions 83 and 102 each coordinate Mg(2+). S121 provides a ligand contact to 4-amino-2-methyl-5-(diphosphooxymethyl)pyrimidine. 148 to 150 (TQS) lines the 2-[(2R,5Z)-2-carboxy-4-methylthiazol-5(2H)-ylidene]ethyl phosphate pocket. K151 is a binding site for 4-amino-2-methyl-5-(diphosphooxymethyl)pyrimidine. Residues G180 and 200–201 (IS) each bind 2-[(2R,5Z)-2-carboxy-4-methylthiazol-5(2H)-ylidene]ethyl phosphate.

It belongs to the thiamine-phosphate synthase family. The cofactor is Mg(2+).

It catalyses the reaction 2-[(2R,5Z)-2-carboxy-4-methylthiazol-5(2H)-ylidene]ethyl phosphate + 4-amino-2-methyl-5-(diphosphooxymethyl)pyrimidine + 2 H(+) = thiamine phosphate + CO2 + diphosphate. It carries out the reaction 2-(2-carboxy-4-methylthiazol-5-yl)ethyl phosphate + 4-amino-2-methyl-5-(diphosphooxymethyl)pyrimidine + 2 H(+) = thiamine phosphate + CO2 + diphosphate. The enzyme catalyses 4-methyl-5-(2-phosphooxyethyl)-thiazole + 4-amino-2-methyl-5-(diphosphooxymethyl)pyrimidine + H(+) = thiamine phosphate + diphosphate. Its pathway is cofactor biosynthesis; thiamine diphosphate biosynthesis; thiamine phosphate from 4-amino-2-methyl-5-diphosphomethylpyrimidine and 4-methyl-5-(2-phosphoethyl)-thiazole: step 1/1. Functionally, condenses 4-methyl-5-(beta-hydroxyethyl)thiazole monophosphate (THZ-P) and 2-methyl-4-amino-5-hydroxymethyl pyrimidine pyrophosphate (HMP-PP) to form thiamine monophosphate (TMP). The polypeptide is Thiamine-phosphate synthase (Pasteurella multocida (strain Pm70)).